The primary structure comprises 103 residues: Large ribosomal subunit protein bL21 (103 aa).

The protein belongs to the bacterial ribosomal protein bL21 family. As to quaternary structure, part of the 50S ribosomal subunit. Contacts protein L20.

This protein binds to 23S rRNA in the presence of protein L20. The polypeptide is Large ribosomal subunit protein bL21 (Nitrosomonas europaea (strain ATCC 19718 / CIP 103999 / KCTC 2705 / NBRC 14298)).